A 412-amino-acid chain; its full sequence is Argininosuccinate synthase (412 aa).

ATP is bound by residues 10–18 and Ala36; that span reads AYSGGLDTS. The L-citrulline site is built by Tyr87 and Ser92. 115–123 provides a ligand contact to ATP; it reads SHGATGKGN. L-aspartate is bound by residues Thr119, Asn123, and Asp124. Asn123 serves as a coordination point for L-citrulline. L-citrulline-binding residues include Arg127, Ser180, Ser189, Glu270, and Tyr282.

It belongs to the argininosuccinate synthase family. In terms of assembly, homotetramer.

The catalysed reaction is L-citrulline + L-aspartate + ATP = 2-(N(omega)-L-arginino)succinate + AMP + diphosphate + H(+). It participates in amino-acid biosynthesis; L-arginine biosynthesis; L-arginine from L-ornithine and carbamoyl phosphate: step 2/3. It functions in the pathway nitrogen metabolism; urea cycle; (N(omega)-L-arginino)succinate from L-aspartate and L-citrulline: step 1/1. The chain is Argininosuccinate synthase from Aedes aegypti (Yellowfever mosquito).